The following is a 763-amino-acid chain: Disintegrin and metalloproteinase domain-containing protein 29 (763 aa).

Residues 1–31 (MNMIEALLSMRVLFLTQVFGIFLCFPGLTKA) form the signal peptide. Residues 32–200 (GHLHYHSSIE…ILKQSSFEDW (169 aa)) constitute a propeptide that is removed on maturation. 3 N-linked (GlcNAc...) asparagine glycosylation sites follow: Asn-164, Asn-177, and Asn-223. At 201-684 (WTHTKIVELV…KTNKKKHFFY (484 aa)) the chain is on the extracellular side. In terms of domain architecture, Peptidase M12B spans 205–396 (KIVELVVVVD…NTRCLMENMY (192 aa)). 3 disulfide bridges follow: Cys-313-Cys-390, Cys-353-Cys-375, and Cys-355-Cys-360. N-linked (GlcNAc...) asparagine glycosylation is found at Asn-374, Asn-424, Asn-434, Asn-475, and Asn-584. Positions 403-489 (RTRCGNGVVE…ECPDDAYVED (87 aa)) constitute a Disintegrin domain. Cys-461 and Cys-481 are oxidised to a cystine. 3 disulfides stabilise this stretch: Cys-631-Cys-642, Cys-636-Cys-648, and Cys-650-Cys-659. The EGF-like domain maps to 631–660 (CTPAFCNYRGICNNKHHCHCNFHWDPPNCM). A helical membrane pass occupies residues 685–705 (LLLLQLIILACLLSCLLWLLF). Residues 706 to 763 (NIKGSKRKPQVQPTPVKTKKVSKKVPSQKPSPVPSPSLPQLRMPSRSASPTSSIKSTN) lie on the Cytoplasmic side of the membrane. The interval 712-763 (RKPQVQPTPVKTKKVSKKVPSQKPSPVPSPSLPQLRMPSRSASPTSSIKSTN) is disordered. Over residues 751–763 (RSASPTSSIKSTN) the composition is skewed to polar residues.

It is found in the membrane. Functionally, may be involved in spermatogenesis and fertilization. Seems to be a non catalytic metalloprotease-like protein. This chain is Disintegrin and metalloproteinase domain-containing protein 29 (Adam29), found in Mus musculus (Mouse).